A 340-amino-acid polypeptide reads, in one-letter code: tRNA N6-adenosine threonylcarbamoyltransferase (340 aa).

Fe cation contacts are provided by histidine 109 and histidine 113. Residues 132–136 (AISGA), aspartate 165, glycine 178, and asparagine 277 contribute to the substrate site. Aspartate 302 lines the Fe cation pocket.

The protein belongs to the KAE1 / TsaD family. Fe(2+) serves as cofactor.

It localises to the cytoplasm. The enzyme catalyses L-threonylcarbamoyladenylate + adenosine(37) in tRNA = N(6)-L-threonylcarbamoyladenosine(37) in tRNA + AMP + H(+). Required for the formation of a threonylcarbamoyl group on adenosine at position 37 (t(6)A37) in tRNAs that read codons beginning with adenine. Is involved in the transfer of the threonylcarbamoyl moiety of threonylcarbamoyl-AMP (TC-AMP) to the N6 group of A37, together with TsaE and TsaB. TsaD likely plays a direct catalytic role in this reaction. This Chlamydia muridarum (strain MoPn / Nigg) protein is tRNA N6-adenosine threonylcarbamoyltransferase.